A 181-amino-acid polypeptide reads, in one-letter code: MLEKSKQKNSFDKNKFIINNKISFPIVRIIDENNYQLGIYKIEDALKLAEEKNLDLVLINDKTEPPVVRIIDYGKFKFAQEKKSREAKKKQHQVTVKEIKMRYKIEDHDYQVRINQAIKFLKLGNKVKISLTFKGREIQYIDLAEKLIEKIIHSLSSLAEHEKVFDKEGKNIYIMLLPKKT.

Belongs to the IF-3 family. In terms of assembly, monomer.

Its subcellular location is the plastid. It is found in the chloroplast. In terms of biological role, IF-3 binds to the 30S ribosomal subunit and shifts the equilibrium between 70S ribosomes and their 50S and 30S subunits in favor of the free subunits, thus enhancing the availability of 30S subunits on which protein synthesis initiation begins. The polypeptide is Translation initiation factor IF-3, chloroplastic (Galdieria sulphuraria (Red alga)).